The chain runs to 69 residues: uncharacterized protein (69 aa).

4Fe-4S ferredoxin-type domains are found at residues 2–30 (KIEI…KSKK) and 38–67 (PPIP…IELS). 8 residues coordinate [4Fe-4S] cluster: cysteine 10, cysteine 13, cysteine 16, cysteine 20, cysteine 47, cysteine 50, cysteine 53, and cysteine 57.

The cofactor is [4Fe-4S] cluster.

This is an uncharacterized protein from Methanocaldococcus jannaschii (strain ATCC 43067 / DSM 2661 / JAL-1 / JCM 10045 / NBRC 100440) (Methanococcus jannaschii).